A 662-amino-acid polypeptide reads, in one-letter code: Methyl-accepting chemotaxis protein TlpB (662 aa).

At 1–16 (MGKFIQWIKQPSISKP) the chain is on the cytoplasmic side. Residues 17-37 (LIAAFLAVLILPVGVLAYFSY) traverse the membrane as a helical segment. Residues 38 to 281 (QSAWNALDRE…LQDASSPVLN (244 aa)) are Extracellular-facing. The Cache domain maps to 153–228 (SEPYTDEATG…KPGTTGSGDW (76 aa)). Residues 282 to 302 (TAVIILCVSIVIGGILILYII) traverse the membrane as a helical segment. Residues 303–355 (RAITKPLRKLVSTSAKISSGDLTEVIDIHSKNEFGQLGESFNEMSASLRSVIG) form the HAMP domain. Over 303 to 662 (RAITKPLRKL…DITKKFKIES (360 aa)) the chain is Cytoplasmic. Residue glutamate 370 is modified to Glutamate methyl ester (Glu). The region spanning 374 to 610 (SAAQTSKATE…EVSSAVEDIS (237 aa)) is the Methyl-accepting transducer domain. Glutamine 594 is subject to Glutamate methyl ester (Gln). 2 positions are modified to glutamate methyl ester (Glu): glutamate 629 and glutamate 636.

Belongs to the methyl-accepting chemotaxis (MCP) protein family.

It localises to the cell membrane. Its function is as follows. Chemotactic-signal transducers respond to changes in the concentration of attractants and repellents in the environment, transduce a signal from the outside to the inside of the cell, and facilitate sensory adaptation through the variation of the level of methylation. All amino acids serve as attractants in B.subtilis, they appear to cause an increase in the turnover methyl groups, leading to methylation of an unidentified acceptor, while repellents have been shown to cause a decrease in methyl group turnover. The methyl groups are added by a methyltransferase and removed by a methylesterase. The chain is Methyl-accepting chemotaxis protein TlpB (tlpB) from Bacillus subtilis (strain 168).